The following is a 151-amino-acid chain: Ribosome maturation factor RimP (151 aa).

This sequence belongs to the RimP family.

It is found in the cytoplasm. Its function is as follows. Required for maturation of 30S ribosomal subunits. The chain is Ribosome maturation factor RimP from Shewanella denitrificans (strain OS217 / ATCC BAA-1090 / DSM 15013).